Here is an 83-residue protein sequence, read N- to C-terminus: Small ribosomal subunit protein bS16 (83 aa).

It belongs to the bacterial ribosomal protein bS16 family.

The sequence is that of Small ribosomal subunit protein bS16 from Shewanella frigidimarina (strain NCIMB 400).